Here is a 241-residue protein sequence, read N- to C-terminus: NAD(P)H-hydrate epimerase (241 aa).

The region spanning 11 to 221 (AASLDKDLME…SIVEKYGLNC (211 aa)) is the YjeF N-terminal domain. 65 to 69 (NNGGD) contributes to the (6S)-NADPHX binding site. K(+) is bound by residues asparagine 66 and aspartate 127. (6S)-NADPHX-binding positions include 131 to 137 (GFSFGGP) and aspartate 160. Residue serine 163 coordinates K(+).

It belongs to the NnrE/AIBP family. The cofactor is K(+).

The protein localises to the cytoplasm. The protein resides in the mitochondrion. The enzyme catalyses (6R)-NADHX = (6S)-NADHX. It carries out the reaction (6R)-NADPHX = (6S)-NADPHX. Catalyzes the epimerization of the S- and R-forms of NAD(P)HX, a damaged form of NAD(P)H that is a result of enzymatic or heat-dependent hydration. This is a prerequisite for the S-specific NAD(P)H-hydrate dehydratase to allow the repair of both epimers of NAD(P)HX. This Aspergillus fumigatus (strain ATCC MYA-4609 / CBS 101355 / FGSC A1100 / Af293) (Neosartorya fumigata) protein is NAD(P)H-hydrate epimerase.